The following is a 109-amino-acid chain: uncharacterized protein (109 aa).

Residues 10–109 (APFEYTLSLI…WGMAQGGPHM (100 aa)) form the HTH hxlR-type domain.

This is an uncharacterized protein from Bacillus subtilis (strain 168).